The following is a 215-amino-acid chain: Octanoyltransferase (215 aa).

One can recognise a BPL/LPL catalytic domain in the interval 31–206; the sequence is TTAPDEIWLV…QLVKHLDYAE (176 aa). Substrate-binding positions include 70-77, 137-139, and 150-152; these read RGGQVTYH, SLG, and GLA. The Acyl-thioester intermediate role is filled by cysteine 168.

Belongs to the LipB family.

Its subcellular location is the cytoplasm. It carries out the reaction octanoyl-[ACP] + L-lysyl-[protein] = N(6)-octanoyl-L-lysyl-[protein] + holo-[ACP] + H(+). The protein operates within protein modification; protein lipoylation via endogenous pathway; protein N(6)-(lipoyl)lysine from octanoyl-[acyl-carrier-protein]: step 1/2. Catalyzes the transfer of endogenously produced octanoic acid from octanoyl-acyl-carrier-protein onto the lipoyl domains of lipoate-dependent enzymes. Lipoyl-ACP can also act as a substrate although octanoyl-ACP is likely to be the physiological substrate. The protein is Octanoyltransferase of Pseudomonas fluorescens (strain Pf0-1).